The following is a 313-amino-acid chain: Ribosomal protein L11 methyltransferase (313 aa).

4 residues coordinate S-adenosyl-L-methionine: Thr-151, Gly-172, Asp-194, and Asn-245.

It belongs to the methyltransferase superfamily. PrmA family.

It is found in the cytoplasm. It catalyses the reaction L-lysyl-[protein] + 3 S-adenosyl-L-methionine = N(6),N(6),N(6)-trimethyl-L-lysyl-[protein] + 3 S-adenosyl-L-homocysteine + 3 H(+). Methylates ribosomal protein L11. The chain is Ribosomal protein L11 methyltransferase from Nitrosomonas europaea (strain ATCC 19718 / CIP 103999 / KCTC 2705 / NBRC 14298).